The following is an 840-amino-acid chain: Protein translocase subunit SecA (840 aa).

ATP is bound by residues Gln-89, 107 to 111 (GEGKT), and Asp-514.

The protein belongs to the SecA family. Monomer and homodimer. Part of the essential Sec protein translocation apparatus which comprises SecA, SecYEG and auxiliary proteins SecDF-YajC and YidC.

The protein localises to the cell inner membrane. It localises to the cytoplasm. It catalyses the reaction ATP + H2O + cellular proteinSide 1 = ADP + phosphate + cellular proteinSide 2.. Functionally, part of the Sec protein translocase complex. Interacts with the SecYEG preprotein conducting channel. Has a central role in coupling the hydrolysis of ATP to the transfer of proteins into and across the cell membrane, serving as an ATP-driven molecular motor driving the stepwise translocation of polypeptide chains across the membrane. The protein is Protein translocase subunit SecA of Blochmanniella floridana.